The chain runs to 304 residues: Recombination-associated protein RdgC (304 aa).

Belongs to the RdgC family.

The protein resides in the cytoplasm. The protein localises to the nucleoid. In terms of biological role, may be involved in recombination. The protein is Recombination-associated protein RdgC of Shewanella baltica (strain OS195).